The following is a 579-amino-acid chain: Nuclear hormone receptor family member nhr-71 (579 aa).

Residues 8–83 (SQECMVCSAP…AGMKIGAVQP (76 aa)) constitute a DNA-binding region (nuclear receptor). 2 NR C4-type zinc fingers span residues 11–31 (CMVCSAPADGLHYGAISCRSC) and 47–71 (CKHTNTCLIDPDGRCACRSCRFTKC). Disordered regions lie at residues 82-124 (QPRR…SDGP) and 168-189 (EPIPSTSSAPEKQSCQSSPNDD). 2 stretches are compositionally biased toward polar residues: residues 106–124 (SMNNSPLERNGNSFSSDGP) and 171–186 (PSTSSAPEKQSCQSSP). Positions 189–452 (DEQQEFNHLV…KFWYETLCYA (264 aa)) constitute an NR LBD domain.

Belongs to the nuclear hormone receptor family.

It is found in the nucleus. In terms of biological role, orphan nuclear receptor. This chain is Nuclear hormone receptor family member nhr-71 (nhr-71), found in Caenorhabditis elegans.